Consider the following 274-residue polypeptide: Large ribosomal subunit protein uL2cz/uL2cy (274 aa).

Disordered regions lie at residues 1 to 25 (MAIHLYKTSTPSTRNGAVDSQVKSN) and 223 to 274 (MNPV…RRTK).

It belongs to the universal ribosomal protein uL2 family. As to quaternary structure, part of the 50S ribosomal subunit.

The protein resides in the plastid. Its subcellular location is the chloroplast. In Citrus sinensis (Sweet orange), this protein is Large ribosomal subunit protein uL2cz/uL2cy (rpl2-A).